We begin with the raw amino-acid sequence, 158 residues long: Phosphopantetheine adenylyltransferase (158 aa).

T10 lines the substrate pocket. ATP contacts are provided by residues 10–11 and H18; that span reads TF. Residues K42, L74, and R88 each contribute to the substrate site. ATP-binding positions include 89-91, E99, and 124-130; these read GLR and NSFISST.

It belongs to the bacterial CoaD family. Homohexamer. The cofactor is Mg(2+).

The protein localises to the cytoplasm. It carries out the reaction (R)-4'-phosphopantetheine + ATP + H(+) = 3'-dephospho-CoA + diphosphate. It functions in the pathway cofactor biosynthesis; coenzyme A biosynthesis; CoA from (R)-pantothenate: step 4/5. In terms of biological role, reversibly transfers an adenylyl group from ATP to 4'-phosphopantetheine, yielding dephospho-CoA (dPCoA) and pyrophosphate. This Shewanella woodyi (strain ATCC 51908 / MS32) protein is Phosphopantetheine adenylyltransferase.